The sequence spans 81 residues: Acyl carrier protein (81 aa).

In terms of domain architecture, Carrier spans 2-80 (ASNEEILAGL…DAVSYIASAQ (79 aa)). Serine 40 is modified (O-(pantetheine 4'-phosphoryl)serine).

Belongs to the acyl carrier protein (ACP) family. Post-translationally, 4'-phosphopantetheine is transferred from CoA to a specific serine of apo-ACP by AcpS. This modification is essential for activity because fatty acids are bound in thioester linkage to the sulfhydryl of the prosthetic group.

The protein localises to the cytoplasm. It participates in lipid metabolism; fatty acid biosynthesis. Carrier of the growing fatty acid chain in fatty acid biosynthesis. This Renibacterium salmoninarum (strain ATCC 33209 / DSM 20767 / JCM 11484 / NBRC 15589 / NCIMB 2235) protein is Acyl carrier protein.